Here is a 579-residue protein sequence, read N- to C-terminus: uncharacterized protein (579 aa).

Residues 1–100 (MSGRRRNHPG…APPCGPYPGE (100 aa)) are disordered. Polar residues predominate over residues 80 to 90 (GQQQSEPQHNS). A run of 11 helical transmembrane segments spans residues 148 to 168 (FAVD…AAAS), 175 to 195 (VALY…LIGP), 206 to 226 (VALA…IMNY), 228 to 248 (GATG…MMVL), 279 to 299 (VFGL…VEFV), 303 to 323 (LFKL…GALL), 378 to 398 (LWGN…PAFV), 407 to 427 (WVQL…NFAG), 448 to 468 (IAVT…MTTI), 504 to 524 (SEST…MVYT), and 526 to 546 (LWVG…QTVV).

To M.tuberculosis Rv0876c.

It is found in the cell membrane. This is an uncharacterized protein from Mycobacterium leprae (strain TN).